We begin with the raw amino-acid sequence, 65 residues long: Putative potassium channel toxin Ts21 (65 aa).

The N-terminal stretch at 1-25 (MNKVYLVAILVLSVLLVANVSPIEG) is a signal peptide. 3 cysteine pairs are disulfide-bonded: cysteine 31–cysteine 53, cysteine 38–cysteine 61, and cysteine 42–cysteine 63.

Belongs to the short scorpion toxin superfamily. Potassium channel inhibitor family. Alpha-KTx 11 subfamily. As to expression, expressed by the venom gland.

It is found in the secreted. In terms of biological role, this recombinant toxin inhibits the mammalian voltage-gated potassium channels Kv1.3/KCNA3 in vitro with an IC(50) of 26.40 nM. This chain is Putative potassium channel toxin Ts21, found in Tityus serrulatus (Brazilian scorpion).